Consider the following 292-residue polypeptide: Bifunctional protein FolD 2 (292 aa).

NADP(+) contacts are provided by residues 166–168 and Ile232; that span reads GHS.

The protein belongs to the tetrahydrofolate dehydrogenase/cyclohydrolase family. Homodimer.

The enzyme catalyses (6R)-5,10-methylene-5,6,7,8-tetrahydrofolate + NADP(+) = (6R)-5,10-methenyltetrahydrofolate + NADPH. The catalysed reaction is (6R)-5,10-methenyltetrahydrofolate + H2O = (6R)-10-formyltetrahydrofolate + H(+). It participates in one-carbon metabolism; tetrahydrofolate interconversion. Functionally, catalyzes the oxidation of 5,10-methylenetetrahydrofolate to 5,10-methenyltetrahydrofolate and then the hydrolysis of 5,10-methenyltetrahydrofolate to 10-formyltetrahydrofolate. The chain is Bifunctional protein FolD 2 from Ruegeria pomeroyi (strain ATCC 700808 / DSM 15171 / DSS-3) (Silicibacter pomeroyi).